We begin with the raw amino-acid sequence, 204 residues long: LEIQAIADDITSKYVPPHVNIFYCLGGITLTSFLVQVATGSAMTFYYRPTVTEAFASVQYLMTEVNFGWLIRSIHRWSASMMVLMMILHVFRVYLTGGFKKPRELTWVTGVILGVLTVSFGVTGYSLPWDQIGYWAVKIVTGVPEAIPVIGSPLVELLRGSVSVGQSTLTRFYSLHTFILPLLTAVFMPMHFLMIRKQGIPGPL.

Residues Y23–M43 form a helical membrane-spanning segment. C24 is a binding site for heme c. Heme b contacts are provided by H75 and H89. Helical transmembrane passes span M81–K101, W107–L127, and A136–L157. 2 residues coordinate heme b: H176 and H191. Residues T177–K197 form a helical membrane-spanning segment.

This sequence belongs to the cytochrome b family. PetB subfamily. As to quaternary structure, the 4 large subunits of the cytochrome b6-f complex are cytochrome b6, subunit IV (17 kDa polypeptide, PetD), cytochrome f and the Rieske protein, while the 4 small subunits are PetG, PetL, PetM and PetN. The complex functions as a dimer. Requires heme b as cofactor. Heme c serves as cofactor.

It is found in the plastid. It localises to the chloroplast thylakoid membrane. Functionally, component of the cytochrome b6-f complex, which mediates electron transfer between photosystem II (PSII) and photosystem I (PSI), cyclic electron flow around PSI, and state transitions. The chain is Cytochrome b6 from Picea abies (Norway spruce).